Reading from the N-terminus, the 193-residue chain is Dual-action ribosomal maturation protein DarP (193 aa).

Residues 1–10 (MRGRDEDTGE) show a composition bias toward basic and acidic residues. Disordered regions lie at residues 1-20 (MRGRDEDTGEFRGASRSQQR) and 171-193 (QEQGLESGDSGLEDGESALEDDE). A compositionally biased stretch (acidic residues) spans 181–193 (GLEDGESALEDDE).

It belongs to the DarP family.

The protein localises to the cytoplasm. In terms of biological role, member of a network of 50S ribosomal subunit biogenesis factors which assembles along the 30S-50S interface, preventing incorrect 23S rRNA structures from forming. Promotes peptidyl transferase center (PTC) maturation. This is Dual-action ribosomal maturation protein DarP from Xanthomonas oryzae pv. oryzae (strain MAFF 311018).